The following is a 288-amino-acid chain: Protease HtpX (288 aa).

The next 2 membrane-spanning stretches (helical) occupy residues 4–24 (VMLF…VLNI) and 36–56 (LSGL…ISLM). A Zn(2+)-binding site is contributed by His-143. Glu-144 is an active-site residue. Position 147 (His-147) interacts with Zn(2+). Helical transmembrane passes span 151–171 (GDMV…IFLS) and 193–213 (MVYF…ASFI). Residue Glu-222 coordinates Zn(2+).

Belongs to the peptidase M48B family. The cofactor is Zn(2+).

It localises to the cell inner membrane. This Vibrio vulnificus (strain YJ016) protein is Protease HtpX.